The chain runs to 89 residues: Small ribosomal subunit protein bS20 (89 aa).

A compositionally biased stretch (basic residues) spans 1 to 12; the sequence is MANIKSAKKRVK. Residues 1–20 are disordered; sequence MANIKSAKKRVKQTVVRNER.

The protein belongs to the bacterial ribosomal protein bS20 family.

Its function is as follows. Binds directly to 16S ribosomal RNA. The sequence is that of Small ribosomal subunit protein bS20 from Xylella fastidiosa (strain 9a5c).